Here is a 238-residue protein sequence, read N- to C-terminus: MAISELKLPAGVGLQVWGSAAEQARGLAAEVAGRLRSALAEQGQALLVVSGGRSPVAFLEALSEEPLDWSRITVSLADERWVPESHADSNAGLVRRHLLRGEAAKARFIGLYQPAASLEEAAELADHHLHELPLPIDVLVLGMGDDGHTASLFPNSPGLDLAMDPQGTRRCLPMWAPSVPHQRLTLPRAVLAAAKVQLLAIQGQSKLATLNAALAVEDERRMPVRAFLRAPLTIHWYP.

This sequence belongs to the glucosamine/galactosamine-6-phosphate isomerase family. 6-phosphogluconolactonase subfamily.

It carries out the reaction 6-phospho-D-glucono-1,5-lactone + H2O = 6-phospho-D-gluconate + H(+). The protein operates within carbohydrate degradation; pentose phosphate pathway; D-ribulose 5-phosphate from D-glucose 6-phosphate (oxidative stage): step 2/3. In terms of biological role, hydrolysis of 6-phosphogluconolactone to 6-phosphogluconate. This is 6-phosphogluconolactonase (pgl) from Pseudomonas aeruginosa (strain ATCC 15692 / DSM 22644 / CIP 104116 / JCM 14847 / LMG 12228 / 1C / PRS 101 / PAO1).